Here is a 679-residue protein sequence, read N- to C-terminus: Shutoff protein (679 aa).

The binding to host EIF4G stretch occupies residues leucine 178–serine 232. Residues arginine 235 to alanine 353 form the RRM domain. Residues tyrosine 252 and tyrosine 564 each carry the phosphotyrosine; by host modification. The segment at arginine 552–serine 679 is disordered. The span at proline 661–serine 679 shows a compositional bias: basic and acidic residues.

This sequence belongs to the adenoviridae shutoff protein family. Monomer. Interacts with hexon protein; this interaction allows chaperoning and trimerization of hexon proteins. Interacts (via N-terminus) with host initiation factor EIF4G (via C-terminus). Interacts (via RRM domain) with viral mRNAs that contain the tripartite leader; this interaction allows ribosome shunting and expression of viral late mRNAs. In terms of processing, might be cleaved by the viral protease. Post-translationally, phosphorylated. Tyrosine phosphorylation enhances preferential binding to tripartite leader mRNAs and allows ribosome shunting. Methylated. Asymmetric dimethylation by host PRMT1 of the Arg/Gly-rich region may regulate shutoff protein binding to hexon and promote the capsid assembly in the nucleus.

It localises to the host cytoplasm. In terms of biological role, protein that inhibits host translation while promoting late viral translation by ribosome shunting. Blocks host cap-dependent translation by binding to eIF4G, displacing MKNK1 from cap initiation complexes and preventing EIF4E phosphorylation. Binds to the tripartite leader sequence of viral late mRNAs and recruits host eIF4G, PABPC1/poly-A binding protein and 40S ribosomes subunits on viral mRNAs, allowing ribosome shunting and efficient translation of late viral mRNAs even though conventional translation via ribosome scanning from the cap has been shut off in the host cell. During assembly, acts as a chaperone protein that helps hexon proteins assembly into trimers. The sequence is that of Shutoff protein from Snake adenovirus serotype 1 (SnAdV-1).